The chain runs to 305 residues: NAD kinase 2 (305 aa).

D78 (proton acceptor) is an active-site residue. NAD(+) is bound by residues 78–79 (DG), 152–153 (NE), D182, 193–198 (TAYSLS), and N251.

This sequence belongs to the NAD kinase family. Requires a divalent metal cation as cofactor.

Its subcellular location is the cytoplasm. It catalyses the reaction NAD(+) + ATP = ADP + NADP(+) + H(+). Involved in the regulation of the intracellular balance of NAD and NADP, and is a key enzyme in the biosynthesis of NADP. Catalyzes specifically the phosphorylation on 2'-hydroxyl of the adenosine moiety of NAD to yield NADP. Functions as a growth repressor under light-activated heterotrophic growth conditions and light and dark cycle conditions in the presence of glucose. NADP(H)/NAD(H) maintenance by slr0400 probably plays a significant role in modulating glycolysis and the TCA cycle to repress the growth rate and maintain the photosynthetic capacity. This Synechocystis sp. (strain ATCC 27184 / PCC 6803 / Kazusa) protein is NAD kinase 2.